Consider the following 385-residue polypeptide: 1-deoxy-D-xylulose 5-phosphate reductoisomerase (385 aa).

Positions 10, 11, 12, 13, 37, and 124 each coordinate NADPH. Lys-125 contacts 1-deoxy-D-xylulose 5-phosphate. Residue Glu-126 participates in NADPH binding. Position 150 (Asp-150) interacts with Mn(2+). Residues Ser-151, Glu-152, Ser-176, and His-199 each coordinate 1-deoxy-D-xylulose 5-phosphate. A Mn(2+)-binding site is contributed by Glu-152. Gly-205 lines the NADPH pocket. 1-deoxy-D-xylulose 5-phosphate contacts are provided by Ser-212, Asn-217, Lys-218, and Glu-221. Glu-221 contacts Mn(2+).

It belongs to the DXR family. Mg(2+) serves as cofactor. It depends on Mn(2+) as a cofactor.

It catalyses the reaction 2-C-methyl-D-erythritol 4-phosphate + NADP(+) = 1-deoxy-D-xylulose 5-phosphate + NADPH + H(+). It functions in the pathway isoprenoid biosynthesis; isopentenyl diphosphate biosynthesis via DXP pathway; isopentenyl diphosphate from 1-deoxy-D-xylulose 5-phosphate: step 1/6. Catalyzes the NADPH-dependent rearrangement and reduction of 1-deoxy-D-xylulose-5-phosphate (DXP) to 2-C-methyl-D-erythritol 4-phosphate (MEP). This chain is 1-deoxy-D-xylulose 5-phosphate reductoisomerase, found in Clostridium botulinum (strain Langeland / NCTC 10281 / Type F).